Reading from the N-terminus, the 104-residue chain is L-rhamnose mutarotase (104 aa).

Substrate is bound at residue tyrosine 18. Histidine 22 functions as the Proton donor in the catalytic mechanism. Substrate-binding positions include tyrosine 41 and 76 to 77 (WW).

The protein belongs to the rhamnose mutarotase family. Homodimer.

Its subcellular location is the cytoplasm. It catalyses the reaction alpha-L-rhamnose = beta-L-rhamnose. It participates in carbohydrate metabolism; L-rhamnose metabolism. In terms of biological role, involved in the anomeric conversion of L-rhamnose. This is L-rhamnose mutarotase from Sinorhizobium fredii (strain NBRC 101917 / NGR234).